We begin with the raw amino-acid sequence, 180 residues long: Large ribosomal subunit protein uL5 (180 aa).

The protein belongs to the universal ribosomal protein uL5 family. As to quaternary structure, part of the 50S ribosomal subunit; part of the 5S rRNA/L5/L18/L25 subcomplex. Contacts the 5S rRNA and the P site tRNA. Forms a bridge to the 30S subunit in the 70S ribosome.

Its function is as follows. This is one of the proteins that bind and probably mediate the attachment of the 5S RNA into the large ribosomal subunit, where it forms part of the central protuberance. In the 70S ribosome it contacts protein S13 of the 30S subunit (bridge B1b), connecting the 2 subunits; this bridge is implicated in subunit movement. Contacts the P site tRNA; the 5S rRNA and some of its associated proteins might help stabilize positioning of ribosome-bound tRNAs. This is Large ribosomal subunit protein uL5 from Latilactobacillus sakei subsp. sakei (strain 23K) (Lactobacillus sakei subsp. sakei).